A 393-amino-acid polypeptide reads, in one-letter code: S-adenosylmethionine synthase (393 aa).

Glu10 contacts Mg(2+). His16 contributes to the ATP binding site. Glu44 is a K(+) binding site. Residues Glu57 and Gln100 each coordinate L-methionine. Residues 168–170 (DGK), 236–239 (SGRF), Asp247, 253–254 (RK), Ala270, Lys274, and Lys278 each bind ATP. Asp247 serves as a coordination point for L-methionine. An L-methionine-binding site is contributed by Lys278.

It belongs to the AdoMet synthase family. In terms of assembly, homotetramer. The cofactor is Mn(2+). It depends on Mg(2+) as a cofactor. Co(2+) is required as a cofactor. K(+) serves as cofactor.

The protein resides in the cytoplasm. It catalyses the reaction L-methionine + ATP + H2O = S-adenosyl-L-methionine + phosphate + diphosphate. The protein operates within amino-acid biosynthesis; S-adenosyl-L-methionine biosynthesis; S-adenosyl-L-methionine from L-methionine: step 1/1. In terms of biological role, catalyzes the formation of S-adenosylmethionine from methionine and ATP. The reaction comprises two steps that are both catalyzed by the same enzyme: formation of S-adenosylmethionine (AdoMet) and triphosphate, and subsequent hydrolysis of the triphosphate. This is S-adenosylmethionine synthase (METK) from Musa acuminata (Banana).